We begin with the raw amino-acid sequence, 608 residues long: Nuclear protein localization protein 4 homolog (608 aa).

A2 bears the N-acetylalanine mark. At K179 the chain carries N6-acetyllysine. The MPN domain maps to 226-363; it reads IMFENHTVAD…MCRLSPDGHF (138 aa). Residues 580–608 form a RanBP2-type zinc finger; the sequence is TAAMWACQHCTFMNQPGTGHCEMCSLPRT.

Belongs to the NPL4 family. Heterodimer with UFD1. The heterodimer binds ubiquitinated proteins. The heterodimer binds to VCP and inhibits Golgi membrane fusion. Interacts with ZFAND2B; probably through VCP. Expressed at highest levels in brain, heart, skeletal muscle, kidney and fetal liver.

It localises to the cytoplasm. Its subcellular location is the cytosol. It is found in the endoplasmic reticulum. The protein resides in the nucleus. The protein operates within protein degradation; proteasomal ubiquitin-dependent pathway. Functionally, the ternary complex containing UFD1, VCP and NPLOC4 binds ubiquitinated proteins and is necessary for the export of misfolded proteins from the ER to the cytoplasm, where they are degraded by the proteasome. The NPLOC4-UFD1-VCP complex regulates spindle disassembly at the end of mitosis and is necessary for the formation of a closed nuclear envelope. Acts as a negative regulator of type I interferon production via the complex formed with VCP and UFD1, which binds to RIGI and recruits RNF125 to promote ubiquitination and degradation of RIGI. The sequence is that of Nuclear protein localization protein 4 homolog (NPLOC4) from Homo sapiens (Human).